A 160-amino-acid chain; its full sequence is Secreted RxLR effector protein RXLR-C11 (160 aa).

A signal peptide spans 1 to 19; sequence MHFSLVLLVFAAIVIPICA. A RxLR-dEER motif is present at residues 58–75; that stretch reads RLLRMNDKAVISDHEEER.

This sequence belongs to the RxLR effector family.

Its subcellular location is the secreted. The protein resides in the host cell membrane. It is found in the host nucleus. Secreted effector that suppresses pattern-triggered immunity (PTI) in plant host. The sequence is that of Secreted RxLR effector protein RXLR-C11 from Plasmopara halstedii (Downy mildew of sunflower).